Reading from the N-terminus, the 108-residue chain is uncharacterized protein (108 aa).

Gly-2 carries N-myristoyl glycine; by host lipidation.

This is an uncharacterized protein from Acanthamoeba polyphaga (Amoeba).